Consider the following 143-residue polypeptide: Large ribosomal subunit protein uL13 (143 aa).

Belongs to the universal ribosomal protein uL13 family. As to quaternary structure, part of the 50S ribosomal subunit.

Functionally, this protein is one of the early assembly proteins of the 50S ribosomal subunit, although it is not seen to bind rRNA by itself. It is important during the early stages of 50S assembly. In Neisseria meningitidis serogroup C (strain 053442), this protein is Large ribosomal subunit protein uL13.